The chain runs to 461 residues: Glutamate--tRNA ligase (461 aa).

The short motif at 8–18 is the 'HIGH' region element; sequence PSPTGYLHIGG. The 'KMSKS' region motif lies at 240–244; sequence KMSKR. Lys243 serves as a coordination point for ATP.

This sequence belongs to the class-I aminoacyl-tRNA synthetase family. Glutamate--tRNA ligase type 1 subfamily. As to quaternary structure, monomer.

The protein localises to the cytoplasm. It carries out the reaction tRNA(Glu) + L-glutamate + ATP = L-glutamyl-tRNA(Glu) + AMP + diphosphate. Its function is as follows. Catalyzes the attachment of glutamate to tRNA(Glu) in a two-step reaction: glutamate is first activated by ATP to form Glu-AMP and then transferred to the acceptor end of tRNA(Glu). The sequence is that of Glutamate--tRNA ligase from Chromobacterium violaceum (strain ATCC 12472 / DSM 30191 / JCM 1249 / CCUG 213 / NBRC 12614 / NCIMB 9131 / NCTC 9757 / MK).